We begin with the raw amino-acid sequence, 791 residues long: Phosphoenolpyruvate synthase (791 aa).

Thr416 carries the phosphothreonine modification. His418 acts as the Tele-phosphohistidine intermediate in catalysis. Substrate is bound by residues Arg508, Arg575, Glu677, Gly698, Ser699, Asn700, and Asp701. Position 677 (Glu677) interacts with Mg(2+). Asp701 lines the Mg(2+) pocket. Tyr744 bears the Phosphotyrosine mark. Cys748 functions as the Proton donor in the catalytic mechanism.

Belongs to the PEP-utilizing enzyme family. Requires Mg(2+) as cofactor.

It catalyses the reaction pyruvate + ATP + H2O = phosphoenolpyruvate + AMP + phosphate + 2 H(+). It functions in the pathway carbohydrate biosynthesis; gluconeogenesis. Its function is as follows. Catalyzes the phosphorylation of pyruvate to phosphoenolpyruvate. In Pseudomonas aeruginosa (strain UCBPP-PA14), this protein is Phosphoenolpyruvate synthase (ppsA).